A 275-amino-acid polypeptide reads, in one-letter code: Putative ribonuclease-like protein YfkH (275 aa).

6 consecutive transmembrane segments (helical) span residues 23-43 (LAYFFLLSLFPFLIFMLTLTA), 83-103 (LLSFGIIAALWSASNGMNAIV), 126-146 (IFLTIAMVFTILVALLLPVFG), 172-192 (WGVSPLVLLIVFSALYVIAPN), 199-219 (FVMPGAVFATIGWIIVSTLFS), and 235-255 (IGGIIVLMIWFYLSGILIILG).

The protein localises to the cell membrane. The protein is Putative ribonuclease-like protein YfkH (yfkH) of Bacillus subtilis (strain 168).